The primary structure comprises 464 residues: D-2-hydroxyglutarate dehydrogenase (464 aa).

Residues 37 to 216 enclose the FAD-binding PCMH-type domain; sequence FAPAPSAIVF…VEATMRLERQ (180 aa). Residues Arg325, Ser329, and Lys339 each coordinate (R)-2-hydroxyglutarate. 3 residues coordinate (R)-malate: Arg325, Ser329, and Lys339. His374 and His381 together coordinate Zn(2+). Asn383 serves as a coordination point for (R)-2-hydroxyglutarate. Position 420 (Glu420) interacts with Zn(2+). His421 is a (R)-2-hydroxyglutarate binding site. His421 contacts (R)-malate.

The protein belongs to the FAD-binding oxidoreductase/transferase type 4 family. As to quaternary structure, homodimer. It depends on FAD as a cofactor.

The enzyme catalyses (R)-2-hydroxyglutarate + A = 2-oxoglutarate + AH2. The catalysed reaction is (R)-malate + A = oxaloacetate + AH2. Activated by Zn(2+) ions at low concentrations (10 uM) and inhibited by Zn(2+), Fe(2+) and Ni(2+) at high concentrations (10 mM). Catalyzes the dehydrogenation of (R)-2-hydroxyglutarate (D-2-hydroxyglutarate or D-2-HG) to 2-oxoglutarate and of (R)-malate (D-malate) to oxaloacetate. Is functionally tied to L-serine biosynthesis, via its coupling with the D-3-phosphoglycerate dehydrogenase SerA, encoded by the adjacent gene in the locus. Is required for the utilization of D-2-hydroxyglutarate as well as D-malate as the sole carbon source for growth of P.stutzeri. Active in vitro with artificial electron acceptors such as 2,6-dichlorophenolindophenol (DCPIP) and appears to couple with electron transfer flavoprotein (ETF) for efficient oxidation of both D-2-hydroxyglutarate and D-malate in vivo. Cannot catalyze the oxidation of L-2-hydroxyglutarate, D-lactate, D-tartrate, D-2-hydroxybutanoate, D-mandelate, D-glycerate and D-phenyllactate. The sequence is that of D-2-hydroxyglutarate dehydrogenase from Stutzerimonas stutzeri (strain A1501) (Pseudomonas stutzeri).